Reading from the N-terminus, the 274-residue chain is ATP synthase subunit b 2 (274 aa).

The chain crosses the membrane as a helical span at residues 2 to 22 (HIDWFVLLAQLVNFLILIYLL).

Belongs to the ATPase B chain family. In terms of assembly, F-type ATPases have 2 components, F(1) - the catalytic core - and F(0) - the membrane proton channel. F(1) has five subunits: alpha(3), beta(3), gamma(1), delta(1), epsilon(1). F(0) has three main subunits: a(1), b(2) and c(10-14). The alpha and beta chains form an alternating ring which encloses part of the gamma chain. F(1) is attached to F(0) by a central stalk formed by the gamma and epsilon chains, while a peripheral stalk is formed by the delta and b chains.

The protein resides in the cell inner membrane. Functionally, f(1)F(0) ATP synthase produces ATP from ADP in the presence of a proton or sodium gradient. F-type ATPases consist of two structural domains, F(1) containing the extramembraneous catalytic core and F(0) containing the membrane proton channel, linked together by a central stalk and a peripheral stalk. During catalysis, ATP synthesis in the catalytic domain of F(1) is coupled via a rotary mechanism of the central stalk subunits to proton translocation. Component of the F(0) channel, it forms part of the peripheral stalk, linking F(1) to F(0). The polypeptide is ATP synthase subunit b 2 (Syntrophus aciditrophicus (strain SB)).